The chain runs to 88 residues: HssA/B-like protein 13 (88 aa).

It belongs to the hssA/B family.

The chain is HssA/B-like protein 13 (hssl13) from Dictyostelium discoideum (Social amoeba).